We begin with the raw amino-acid sequence, 153 residues long: Peritrophin-1 (153 aa).

The first 17 residues, 1–17, serve as a signal peptide directing secretion; the sequence is MKVSASLVLLLAAAVLA. Chitin-binding type-2 domains follow at residues 18 to 79 and 92 to 153; these read DDRC…QCAP and SPNC…QCEE. Intrachain disulfides connect cysteine 56–cysteine 69 and cysteine 130–cysteine 143. An N-linked (GlcNAc...) asparagine glycan is attached at asparagine 63.

Glycosylated. In terms of tissue distribution, adult peritrophic membrane.

Its function is as follows. Binds chitin but not cellulose. May be involved in the spatial organization of PM. This Anopheles gambiae (African malaria mosquito) protein is Peritrophin-1 (Aper1).